Here is a 282-residue protein sequence, read N- to C-terminus: MQVITSVKEAKQIVKDWKSHQLSIGYVPTMGFLHDGHLSLVKNAKTQDKVIVSIFVNPMQFGPNEDFSSYPRDLERDIKMCQDNGVDMVFIPDAAQMYLKNFSTYVDMNTITDKLCGAKRLGHFRGVCTVLAKFFNILNPDIVYMGQKDAQQCVVVRHMVDDLNFDLKIQICPIIREEDGLAKSSRNVYLSEEERKASLAISQSIFLAEKLVQEGEKDTSKIIQAMKDILEKEKLIKIDYIELVDFNTMENIKNIADNVLGAVAAFVGKTRLIDNFLVQGLK.

30–37 (MGFLHDGH) is a binding site for ATP. His-37 acts as the Proton donor in catalysis. Residue Gln-60 coordinates (R)-pantoate. Beta-alanine is bound at residue Gln-60. 146 to 149 (GQKD) contributes to the ATP binding site. Gln-152 contacts (R)-pantoate. ATP-binding positions include Ile-175 and 183–186 (KSSR).

The protein belongs to the pantothenate synthetase family. Homodimer.

The protein resides in the cytoplasm. The enzyme catalyses (R)-pantoate + beta-alanine + ATP = (R)-pantothenate + AMP + diphosphate + H(+). It participates in cofactor biosynthesis; (R)-pantothenate biosynthesis; (R)-pantothenate from (R)-pantoate and beta-alanine: step 1/1. Functionally, catalyzes the condensation of pantoate with beta-alanine in an ATP-dependent reaction via a pantoyl-adenylate intermediate. The protein is Pantothenate synthetase of Campylobacter jejuni subsp. jejuni serotype O:23/36 (strain 81-176).